We begin with the raw amino-acid sequence, 200 residues long: Large ribosomal subunit protein uL4 (200 aa).

The interval 43–71 (RAQKTRAEVSGSGKKPWRQKGTGRARSGD) is disordered.

Belongs to the universal ribosomal protein uL4 family. As to quaternary structure, part of the 50S ribosomal subunit.

Its function is as follows. One of the primary rRNA binding proteins, this protein initially binds near the 5'-end of the 23S rRNA. It is important during the early stages of 50S assembly. It makes multiple contacts with different domains of the 23S rRNA in the assembled 50S subunit and ribosome. Forms part of the polypeptide exit tunnel. This chain is Large ribosomal subunit protein uL4, found in Histophilus somni (strain 2336) (Haemophilus somnus).